Consider the following 266-residue polypeptide: Outer membrane protein OmpK (266 aa).

The signal sequence occupies residues 1–20 (MRKSLLALSLLAATSAPVLA).

The protein belongs to the nucleoside-specific channel-forming outer membrane porin (Tsx) (TC 1.B.10) family.

It localises to the cell outer membrane. Its function is as follows. Serves as receptor for a broad-host-range vibriophage, KVP40. The chain is Outer membrane protein OmpK (ompK) from Vibrio parahaemolyticus serotype O3:K6 (strain RIMD 2210633).